Reading from the N-terminus, the 554-residue chain is Oxygen-dependent choline dehydrogenase (554 aa).

Residue 4–33 (DYIIIGAGSAGNVLATRLTEDPNTTVLLLE) participates in FAD binding. Histidine 473 acts as the Proton acceptor in catalysis.

This sequence belongs to the GMC oxidoreductase family. Requires FAD as cofactor.

The catalysed reaction is choline + A = betaine aldehyde + AH2. It carries out the reaction betaine aldehyde + NAD(+) + H2O = glycine betaine + NADH + 2 H(+). It participates in amine and polyamine biosynthesis; betaine biosynthesis via choline pathway; betaine aldehyde from choline (cytochrome c reductase route): step 1/1. In terms of biological role, involved in the biosynthesis of the osmoprotectant glycine betaine. Catalyzes the oxidation of choline to betaine aldehyde and betaine aldehyde to glycine betaine at the same rate. The protein is Oxygen-dependent choline dehydrogenase of Klebsiella pneumoniae subsp. pneumoniae (strain ATCC 700721 / MGH 78578).